The primary structure comprises 148 residues: Antitoxin Xre (148 aa).

This sequence belongs to the MbcA/ParS/Xre antitoxin family. In terms of assembly, homodimer. Forms a complex with cognate toxin Rse.

In terms of biological role, antitoxin component of a type II toxin-antitoxin (TA) system. Neutralizes the activity of cognate toxin Res. This Yersinia enterocolitica serotype O:8 / biotype 1B (strain NCTC 13174 / 8081) protein is Antitoxin Xre.